The following is a 736-amino-acid chain: Polyribonucleotide nucleotidyltransferase (736 aa).

Mg(2+) is bound by residues Asp-493 and Asp-499. In terms of domain architecture, KH spans Pro-560–Ile-619. One can recognise an S1 motif domain in the interval Gly-629–Glu-703. Positions Glu-710–Thr-736 are disordered. Positions Arg-720–Thr-736 are enriched in basic and acidic residues.

The protein belongs to the polyribonucleotide nucleotidyltransferase family. Mg(2+) serves as cofactor.

The protein localises to the cytoplasm. The enzyme catalyses RNA(n+1) + phosphate = RNA(n) + a ribonucleoside 5'-diphosphate. In terms of biological role, involved in mRNA degradation. Catalyzes the phosphorolysis of single-stranded polyribonucleotides processively in the 3'- to 5'-direction. The protein is Polyribonucleotide nucleotidyltransferase of Lawsonia intracellularis (strain PHE/MN1-00).